A 511-amino-acid chain; its full sequence is MSTPEPVLAGPGILLVLDGWGSADAADDNALSLARTPVLDELVAQHPSTLAEASGEAVGLLPGTVGNSEIGHMVIGAGRPLPYDSLLVQQAIDSGALRSHPRLDAVLNEVAATSGALHLIGLCSDGQIHAHVEHLSELLAAAATHQVERVFIHAITDGRDVADHTGEAYLTRVAELAAAAGTGQIATVIGRGYAMDKAGDLDLTERAVALVADGRGSPADSAHSAVHSSERGDEWVPASVLTEAGDARVADGDAVLWFNFRSDRIQQFADRLHEHLTASGRTVNMVSLAQYDTRTAIPALVKRADASGGLADELQEAGLRSVRIAETEKFEHVTYYINGRDATVRDGEEHVRITGEGKADYVAHPHMNLDRVTDAVVEAAGRVDVDLVIANLANIDVVGHTGNLAATVTACEATDAAVDQILQAARNSGRWVVAVGDHGNAERMTKQAPDGSVRPYGGHTTNPVPLVIVPNRTDTPAPTLPGTATLADVAPTILHLLGHKPGPAMTGRPLL.

Mn(2+) is bound by residues D18 and S68. S68 acts as the Phosphoserine intermediate in catalysis. Substrate contacts are provided by residues H129, 159–160 (RD), R191, K197, 261–264 (RSDR), and K329. Mn(2+)-binding residues include D396, H400, D437, H438, and H459. A disordered region spans residues 442–464 (ERMTKQAPDGSVRPYGGHTTNPV).

This sequence belongs to the BPG-independent phosphoglycerate mutase family. In terms of assembly, monomer. Mn(2+) is required as a cofactor.

It catalyses the reaction (2R)-2-phosphoglycerate = (2R)-3-phosphoglycerate. The protein operates within carbohydrate degradation; glycolysis; pyruvate from D-glyceraldehyde 3-phosphate: step 3/5. Catalyzes the interconversion of 2-phosphoglycerate and 3-phosphoglycerate. This chain is 2,3-bisphosphoglycerate-independent phosphoglycerate mutase, found in Streptomyces coelicolor (strain ATCC BAA-471 / A3(2) / M145).